A 321-amino-acid chain; its full sequence is Iron(3+)-hydroxamate-binding protein YxeB (321 aa).

The N-terminal stretch at 1–20 (MKKNILLVGMLVLLLMFVSA) is a signal peptide. Cys-21 carries the N-palmitoyl cysteine lipid modification. A lipid anchor (S-diacylglycerol cysteine) is attached at Cys-21. The span at 24 to 33 (TASKGSSSDS) shows a compositional bias: low complexity. A disordered region spans residues 24–48 (TASKGSSSDSASEKTEMRTYKSPKG). One can recognise a Fe/B12 periplasmic-binding domain in the interval 58–316 (RIVTDFYAGE…IITDMLIKRA (259 aa)).

The protein belongs to the bacterial solute-binding protein 8 family. As to quaternary structure, the complex is composed of an ATP-binding protein (FhuC), two transmembrane proteins (FhuB and FhuG) and a solute-binding protein (FhuD or YxeB).

It localises to the cell membrane. Its subcellular location is the membrane raft. Part of the ABC transporter complex FhuCBGD involved in iron(3+)-hydroxamate import. Binds the iron(3+)-hydroxamate complex and transfers it to the membrane-bound permease. Partially required for the transport of desferrioxamine. This chain is Iron(3+)-hydroxamate-binding protein YxeB (yxeB), found in Bacillus subtilis (strain 168).